A 246-amino-acid polypeptide reads, in one-letter code: MNPLISDFQTPQQRTPVIVALDFANEKDTLGFVRNLDPTLCQIKIGKELFTATGRSLAESLINQGFKLFLDLKYHDIPHTVAQACKVAADMGVWMVDMHASGGRRMMEAAAEAVAGYGTKPLLIGVTVLTSMEQSDLAEIGLNIAPEEQVIRLAKLAQSSGLDGVVCSAQEAAPLRRELGQDFVLVTPGIRLDVAGNNDDQRRIMTPAEALAAGSTYLVMGRPVTQAANPLAVLREVNRVANLEAN.

Residues aspartate 22, lysine 44, aspartate 71–threonine 80, threonine 130, arginine 191, glutamine 201, glycine 221, and arginine 222 contribute to the substrate site. The Proton donor role is filled by lysine 73.

Belongs to the OMP decarboxylase family. Type 1 subfamily. In terms of assembly, homodimer.

The enzyme catalyses orotidine 5'-phosphate + H(+) = UMP + CO2. It functions in the pathway pyrimidine metabolism; UMP biosynthesis via de novo pathway; UMP from orotate: step 2/2. Its function is as follows. Catalyzes the decarboxylation of orotidine 5'-monophosphate (OMP) to uridine 5'-monophosphate (UMP). This is Orotidine 5'-phosphate decarboxylase from Neisseria meningitidis serogroup C (strain 053442).